The primary structure comprises 141 residues: Hemoglobin subunit alpha (141 aa).

Positions 1 to 141 (VLSGEDKNNI…VSTVLTSKYR (141 aa)) constitute a Globin domain. At Ser3 the chain carries Phosphoserine. Residues Lys7 and Lys11 each carry the N6-succinyllysine modification. Lys16 is subject to N6-acetyllysine; alternate. Lys16 bears the N6-succinyllysine; alternate mark. A Phosphotyrosine modification is found at Tyr24. Lys40 bears the N6-succinyllysine mark. Ser49 is modified (phosphoserine). Residue His58 participates in O2 binding. Residue His87 coordinates heme b. Ser102 is subject to Phosphoserine. Phosphothreonine is present on Thr108. Phosphoserine is present on residues Ser124 and Ser131. Thr134 and Thr137 each carry phosphothreonine. At Ser138 the chain carries Phosphoserine.

It belongs to the globin family. Heterotetramer of two alpha chains and two beta chains. In terms of tissue distribution, red blood cells.

In terms of biological role, involved in oxygen transport from the lung to the various peripheral tissues. Its function is as follows. Hemopressin acts as an antagonist peptide of the cannabinoid receptor CNR1. Hemopressin-binding efficiently blocks cannabinoid receptor CNR1 and subsequent signaling. This is Hemoglobin subunit alpha (HBA) from Ondatra zibethicus (Muskrat).